A 405-amino-acid chain; its full sequence is Acetylornithine/succinyldiaminopimelate aminotransferase (405 aa).

Pyridoxal 5'-phosphate is bound by residues 108–109 and phenylalanine 141; that span reads GT. Arginine 144 serves as a coordination point for N(2)-acetyl-L-ornithine. 226-229 provides a ligand contact to pyridoxal 5'-phosphate; that stretch reads DEVQ. Lysine 255 is subject to N6-(pyridoxal phosphate)lysine. Serine 283 contacts N(2)-acetyl-L-ornithine. Residue threonine 284 coordinates pyridoxal 5'-phosphate.

The protein belongs to the class-III pyridoxal-phosphate-dependent aminotransferase family. ArgD subfamily. Homodimer. The cofactor is pyridoxal 5'-phosphate.

Its subcellular location is the cytoplasm. The enzyme catalyses N(2)-acetyl-L-ornithine + 2-oxoglutarate = N-acetyl-L-glutamate 5-semialdehyde + L-glutamate. The catalysed reaction is N-succinyl-(2S,6S)-2,6-diaminopimelate + 2-oxoglutarate = (S)-2-succinylamino-6-oxoheptanedioate + L-glutamate. It functions in the pathway amino-acid biosynthesis; L-arginine biosynthesis; N(2)-acetyl-L-ornithine from L-glutamate: step 4/4. The protein operates within amino-acid biosynthesis; L-lysine biosynthesis via DAP pathway; LL-2,6-diaminopimelate from (S)-tetrahydrodipicolinate (succinylase route): step 2/3. In terms of biological role, involved in both the arginine and lysine biosynthetic pathways. This is Acetylornithine/succinyldiaminopimelate aminotransferase from Salmonella typhi.